The chain runs to 321 residues: Sideroflexin-3 (321 aa).

At Met1 the chain carries N-acetylmethionine. 4 helical membrane-spanning segments follow: residues 146-164 (LGTA…ALGL), 174-194 (LVGR…NIPL), 226-246 (FQVV…PPLI), and 266-286 (LQVG…CALF).

The protein belongs to the sideroflexin family.

The protein resides in the mitochondrion membrane. The enzyme catalyses L-serine(in) = L-serine(out). Functionally, mitochondrial serine transporter that mediates transport of serine into mitochondria, an important step of the one-carbon metabolism pathway. Mitochondrial serine is converted to glycine and formate, which then exits to the cytosol where it is used to generate the charged folates that serve as one-carbon donors. In Homo sapiens (Human), this protein is Sideroflexin-3.